Consider the following 172-residue polypeptide: Small ribosomal subunit protein uS5 (172 aa).

An S5 DRBM domain is found at 17 to 80 (LREKMISVNR…EQARRNMFKV (64 aa)).

The protein belongs to the universal ribosomal protein uS5 family. As to quaternary structure, part of the 30S ribosomal subunit. Contacts proteins S4 and S8.

With S4 and S12 plays an important role in translational accuracy. Functionally, located at the back of the 30S subunit body where it stabilizes the conformation of the head with respect to the body. The sequence is that of Small ribosomal subunit protein uS5 from Burkholderia lata (strain ATCC 17760 / DSM 23089 / LMG 22485 / NCIMB 9086 / R18194 / 383).